Here is a 125-residue protein sequence, read N- to C-terminus: Fluoride-specific ion channel FluC (125 aa).

Helical transmembrane passes span 6 to 26 (VLVM…GLGI), 35 to 55 (FLFG…GLFA), 66 to 86 (LLLL…ALSI), and 100 to 120 (AMGY…AGYL). Positions 76 and 79 each coordinate Na(+).

This sequence belongs to the fluoride channel Fluc/FEX (TC 1.A.43) family.

The protein localises to the cell inner membrane. The catalysed reaction is fluoride(in) = fluoride(out). Na(+) is not transported, but it plays an essential structural role and its presence is essential for fluoride channel function. Its function is as follows. Fluoride-specific ion channel. Important for reducing fluoride concentration in the cell, thus reducing its toxicity. The polypeptide is Fluoride-specific ion channel FluC (Gloeobacter violaceus (strain ATCC 29082 / PCC 7421)).